The sequence spans 69 residues: Sec-independent protein translocase protein TatA (69 aa).

Residues 1-21 (MGSLSIWHWLIVLAIALLLFG) form a helical membrane-spanning segment. The tract at residues 41-69 (KGMNDDEETPPPAQSTTSRTVEHKADESK) is disordered. Positions 60-69 (TVEHKADESK) are enriched in basic and acidic residues.

The protein belongs to the TatA/E family. As to quaternary structure, the Tat system comprises two distinct complexes: a TatABC complex, containing multiple copies of TatA, TatB and TatC subunits, and a separate TatA complex, containing only TatA subunits. Substrates initially bind to the TatABC complex, which probably triggers association of the separate TatA complex to form the active translocon.

It localises to the cell inner membrane. Its function is as follows. Part of the twin-arginine translocation (Tat) system that transports large folded proteins containing a characteristic twin-arginine motif in their signal peptide across membranes. TatA could form the protein-conducting channel of the Tat system. This chain is Sec-independent protein translocase protein TatA, found in Rhizobium rhizogenes (strain K84 / ATCC BAA-868) (Agrobacterium radiobacter).